The following is a 637-amino-acid chain: Chaperone protein HtpG (637 aa).

Residues 1 to 348 are a; substrate-binding; it reads MAEAGQMEKH…SNDLPLNVSR (348 aa). The segment at 349–565 is b; the sequence is EILQDNKITR…DNDMSTQMAK (217 aa). The c stretch occupies residues 566–637; it reads LMEAAGQAVP…TRLNKLMLNA (72 aa).

This sequence belongs to the heat shock protein 90 family. As to quaternary structure, homodimer.

The protein localises to the cytoplasm. In terms of biological role, molecular chaperone. Has ATPase activity. This chain is Chaperone protein HtpG, found in Idiomarina loihiensis (strain ATCC BAA-735 / DSM 15497 / L2-TR).